Here is a 502-residue protein sequence, read N- to C-terminus: Zinc finger protein 3 homolog (502 aa).

Basic and acidic residues-rich tracts occupy residues 1 to 13 (MGTE…PKEE) and 80 to 93 (PSSE…ESER). Disordered stretches follow at residues 1–26 (MGTE…SLLE) and 47–103 (LEGH…NLVT). Glycyl lysine isopeptide (Lys-Gly) (interchain with G-Cter in SUMO2) cross-links involve residues K6 and K11. 13 consecutive C2H2-type zinc fingers follow at residues 141-163 (HTCK…MRVH), 169-191 (FECK…LRIH), 197-219 (FACN…HRIH), 225-247 (YKCE…QRIH), 253-275 (YECN…QRIH), 281-303 (HECN…QKIH), 309-331 (YLCN…QRIH), 337-359 (YECN…IRIH), 365-387 (YVCK…ERIH), 393-415 (YECF…QRIH), 421-443 (HQCN…QKIH), 449-471 (YECS…QRIH), and 477-499 (YECQ…QSVH).

This sequence belongs to the krueppel C2H2-type zinc-finger protein family.

The protein resides in the nucleus. Its function is as follows. May be involved in transcriptional regulation. This chain is Zinc finger protein 3 homolog (ZFP3), found in Homo sapiens (Human).